Reading from the N-terminus, the 812-residue chain is E3 UFM1-protein ligase 1 homolog (812 aa).

Residues 389 to 495 are disordered; the sequence is IKHSAGQGKP…KTKEDNTNIF (107 aa). 2 stretches are compositionally biased toward basic and acidic residues: residues 403–415 and 475–491; these read SEHR…KDLG and DAKH…KEDN.

This sequence belongs to the UFL1 family.

Functionally, E3 UFM1-protein ligase that mediates ufmylation of target proteins. The sequence is that of E3 UFM1-protein ligase 1 homolog from Oryza sativa subsp. indica (Rice).